The chain runs to 94 residues: Integration host factor subunit beta (94 aa).

Belongs to the bacterial histone-like protein family. In terms of assembly, heterodimer of an alpha and a beta chain.

This protein is one of the two subunits of integration host factor, a specific DNA-binding protein that functions in genetic recombination as well as in transcriptional and translational control. This Edwardsiella ictaluri (strain 93-146) protein is Integration host factor subunit beta.